The primary structure comprises 148 residues: Puroindoline-B (148 aa).

The N-terminal stretch at 1–19 is a signal peptide; it reads MKTLFLLALLALVASTTFA. Residues 20-29 constitute a propeptide that is removed on maturation; sequence QYSEVGGWYN.

In terms of processing, five disulfide bonds are present. Endosperm and aleurone layer of developing kernels. In the aleurone layer, mainly localized to starch granules and the surface of the plasma membrane, forming a uniform layer, also abundant in the intercellular space. In the endosperm, mainly localized to starch granules and the plasma membrane, but less abundant in the intercellular space. Not found in roots or coleoptiles.

It is found in the membrane. Its subcellular location is the secreted. It localises to the extracellular space. Its function is as follows. Acts as a membranotoxin, probably through its antibacterial and antifungal activities, contributing to the defense mechanism of the plant against predators. Forms monovalent cation-selective ion channels in membranes. Has antibacterial activity against the Gram-positive bacteria S.aureus and C.michiganensis, and the Gram-negative bacteria E.coli, P.syringae pv phaseoli, A.tumefaciens and E.carotovora subsp carotovora. Acts synergistically with PINA against bacteria. Contributes to grain texture and hardness. This is Puroindoline-B (PINB) from Triticum aestivum (Wheat).